Reading from the N-terminus, the 375-residue chain is Phosphoribulokinase, chloroplastic (375 aa).

The transit peptide at 1–31 (MAFTMRAPAPRATAQSRVTANRARRSLVVRA) directs the protein to the chloroplast. An intrachain disulfide couples Cys47 to Cys86.

It belongs to the phosphoribulokinase family. As to quaternary structure, component of a complex that contains two dimers of PRK, two tetramers of GAPDH and CP12.

It localises to the plastid. The protein resides in the chloroplast. The enzyme catalyses D-ribulose 5-phosphate + ATP = D-ribulose 1,5-bisphosphate + ADP + H(+). The protein operates within carbohydrate biosynthesis; Calvin cycle. With respect to regulation, light regulated via thioredoxin by reversible oxidation/reduction of sulfhydryl/disulfide groups. The chain is Phosphoribulokinase, chloroplastic (PRKA) from Chlamydomonas reinhardtii (Chlamydomonas smithii).